The sequence spans 279 residues: Zinc-finger homeodomain protein 1 (279 aa).

Positions 1–13 (MDFDDHDDGDEEM) are enriched in acidic residues. Positions 1–47 (MDFDDHDDGDEEMPPMPVSSSYETPPQHGLAGGGMAPKPPGEIGSHV) are disordered. Residues 57-106 (YRECLKNHAVGIGGHAVDGCGEFMAAGEEGTIDALRCAACNCHRNFHRKE) form a ZF-HD dimerization-type; degenerate zinc finger. The segment at 157-191 (AAAAAAGGHPQRPLALPSTSHSGRDDGDDLSGMVG) is disordered. Positions 215-278 (KKRFRTKFTQ…NNKHTLGKKL (64 aa)) form a DNA-binding region, homeobox.

Homo- and heterodimer with other ZFHD proteins.

The protein resides in the nucleus. Functionally, putative transcription factor. This is Zinc-finger homeodomain protein 1 (ZHD1) from Oryza sativa subsp. indica (Rice).